Reading from the N-terminus, the 273-residue chain is Ribosomal RNA small subunit methyltransferase A (273 aa).

6 residues coordinate S-adenosyl-L-methionine: Asn-18, Leu-20, Gly-45, Glu-66, Asp-91, and Asn-113.

This sequence belongs to the class I-like SAM-binding methyltransferase superfamily. rRNA adenine N(6)-methyltransferase family. RsmA subfamily.

It localises to the cytoplasm. The enzyme catalyses adenosine(1518)/adenosine(1519) in 16S rRNA + 4 S-adenosyl-L-methionine = N(6)-dimethyladenosine(1518)/N(6)-dimethyladenosine(1519) in 16S rRNA + 4 S-adenosyl-L-homocysteine + 4 H(+). Functionally, specifically dimethylates two adjacent adenosines (A1518 and A1519) in the loop of a conserved hairpin near the 3'-end of 16S rRNA in the 30S particle. May play a critical role in biogenesis of 30S subunits. The protein is Ribosomal RNA small subunit methyltransferase A of Escherichia coli O81 (strain ED1a).